We begin with the raw amino-acid sequence, 881 residues long: Alanine--tRNA ligase (881 aa).

Residues 422 to 440 (FEDEMQKQKERARSARSTE) show a composition bias toward basic and acidic residues. Residues 422–445 (FEDEMQKQKERARSARSTEKSMGV) are disordered. His-567, His-571, Cys-669, and His-673 together coordinate Zn(2+).

It belongs to the class-II aminoacyl-tRNA synthetase family. It depends on Zn(2+) as a cofactor.

Its subcellular location is the cytoplasm. It catalyses the reaction tRNA(Ala) + L-alanine + ATP = L-alanyl-tRNA(Ala) + AMP + diphosphate. Catalyzes the attachment of alanine to tRNA(Ala) in a two-step reaction: alanine is first activated by ATP to form Ala-AMP and then transferred to the acceptor end of tRNA(Ala). Also edits incorrectly charged Ser-tRNA(Ala) and Gly-tRNA(Ala) via its editing domain. The polypeptide is Alanine--tRNA ligase (Pediococcus pentosaceus (strain ATCC 25745 / CCUG 21536 / LMG 10740 / 183-1w)).